We begin with the raw amino-acid sequence, 93 residues long: Muconolactone Delta-isomerase (93 aa).

Belongs to the muconolactone Delta-isomerase family. As to quaternary structure, homodecamer.

The catalysed reaction is (S)-muconolactone = (4,5-dihydro-5-oxofuran-2-yl)-acetate. Its pathway is aromatic compound metabolism; beta-ketoadipate pathway; 5-oxo-4,5-dihydro-2-furylacetate from catechol: step 3/3. The protein is Muconolactone Delta-isomerase (catC) of Rhodococcus opacus (Nocardia opaca).